A 293-amino-acid chain; its full sequence is Bifunctional protein FolD (293 aa).

NADP(+) is bound by residues Gly162–Ser164 and Ile227.

The protein belongs to the tetrahydrofolate dehydrogenase/cyclohydrolase family. In terms of assembly, homodimer.

It catalyses the reaction (6R)-5,10-methylene-5,6,7,8-tetrahydrofolate + NADP(+) = (6R)-5,10-methenyltetrahydrofolate + NADPH. The catalysed reaction is (6R)-5,10-methenyltetrahydrofolate + H2O = (6R)-10-formyltetrahydrofolate + H(+). It participates in one-carbon metabolism; tetrahydrofolate interconversion. In terms of biological role, catalyzes the oxidation of 5,10-methylenetetrahydrofolate to 5,10-methenyltetrahydrofolate and then the hydrolysis of 5,10-methenyltetrahydrofolate to 10-formyltetrahydrofolate. This chain is Bifunctional protein FolD, found in Metamycoplasma arthritidis (strain 158L3-1) (Mycoplasma arthritidis).